Reading from the N-terminus, the 139-residue chain is D-ribose pyranase (139 aa).

Catalysis depends on His20, which acts as the Proton donor. Substrate contacts are provided by residues Asp28, His106, and 128–130 (YAN).

The protein belongs to the RbsD / FucU family. RbsD subfamily. In terms of assembly, homodecamer.

It localises to the cytoplasm. The catalysed reaction is beta-D-ribopyranose = beta-D-ribofuranose. It functions in the pathway carbohydrate metabolism; D-ribose degradation; D-ribose 5-phosphate from beta-D-ribopyranose: step 1/2. Catalyzes the interconversion of beta-pyran and beta-furan forms of D-ribose. The sequence is that of D-ribose pyranase from Aliivibrio salmonicida (strain LFI1238) (Vibrio salmonicida (strain LFI1238)).